The sequence spans 295 residues: Fructose-bisphosphate aldolase class 1 (295 aa).

Residue E176 is the Proton acceptor of the active site. K213 acts as the Schiff-base intermediate with dihydroxyacetone-P in catalysis.

It belongs to the class I fructose-bisphosphate aldolase family.

The enzyme catalyses beta-D-fructose 1,6-bisphosphate = D-glyceraldehyde 3-phosphate + dihydroxyacetone phosphate. It participates in carbohydrate degradation; glycolysis; D-glyceraldehyde 3-phosphate and glycerone phosphate from D-glucose: step 4/4. The sequence is that of Fructose-bisphosphate aldolase class 1 from Clostridium beijerinckii (strain ATCC 51743 / NCIMB 8052) (Clostridium acetobutylicum).